The chain runs to 191 residues: uncharacterized protein (191 aa).

An N-terminal signal peptide occupies residues 1–23; the sequence is MKKTMSAITAAAAVTSCFTGFGA.

This is an uncharacterized protein from Bacillus subtilis (strain 168).